A 132-amino-acid chain; its full sequence is MFRERIIVQDSLVADESGSAFRIRLPWYRALPLSTIEELSVTVDGTAFDPARLRIAVNDGEWALAEAQLRTDDVWFVLDDATVRLPGLVLDAGAHEVQATLSMRIPYLPVAGKPLSMAETDQKRMDVKELTA.

This sequence belongs to the C-glycoside deglycosidase beta subunit family. As to quaternary structure, heterodimer composed of an alpha subunit (CarB) and a beta subunit (CarC). The cofactor is Mg(2+).

The catalysed reaction is 3'-dehydrocarminate + H(+) = kermesate + 1,5-anhydro-D-erythro-hex-1-en-3-ulose. Activity is strongly reduced in the presence of chelating agents. In terms of biological role, carbon-carbon bond-cleaving enzyme which participates in a carminate degradation pathway. Cleaves the C-C bond in 3'-dehydrocarminate to form kermesate. Also shows weak activity with other C-glycosides, such as 3''-dehydropuerarin (3''-oxo-puerarin), 3''-dehydroisoorientin (3''-oxo-homoorientin) and 3'-dehydromangiferin (3'-oxo-mangiferin). This chain is 3'-dehydrocarminate deglycosidase beta subunit, found in Microbacterium sp.